A 177-amino-acid polypeptide reads, in one-letter code: Peptide methionine sulfoxide reductase MsrA (177 aa).

Cys15 is an active-site residue.

The protein belongs to the MsrA Met sulfoxide reductase family.

The catalysed reaction is L-methionyl-[protein] + [thioredoxin]-disulfide + H2O = L-methionyl-(S)-S-oxide-[protein] + [thioredoxin]-dithiol. The enzyme catalyses [thioredoxin]-disulfide + L-methionine + H2O = L-methionine (S)-S-oxide + [thioredoxin]-dithiol. Its function is as follows. Has an important function as a repair enzyme for proteins that have been inactivated by oxidation. Catalyzes the reversible oxidation-reduction of methionine sulfoxide in proteins to methionine. The chain is Peptide methionine sulfoxide reductase MsrA from Mycobacterium leprae (strain Br4923).